A 361-amino-acid polypeptide reads, in one-letter code: 3-dehydroquinate synthase (361 aa).

Residues 104–108 (GVIGD), 128–129 (TT), Lys-141, Lys-150, and 168–171 (FLRT) contribute to the NAD(+) site. Residues Glu-183, His-246, and His-263 each contribute to the Zn(2+) site.

This sequence belongs to the sugar phosphate cyclases superfamily. Dehydroquinate synthase family. It depends on Co(2+) as a cofactor. Zn(2+) serves as cofactor. Requires NAD(+) as cofactor.

It is found in the cytoplasm. It catalyses the reaction 7-phospho-2-dehydro-3-deoxy-D-arabino-heptonate = 3-dehydroquinate + phosphate. The protein operates within metabolic intermediate biosynthesis; chorismate biosynthesis; chorismate from D-erythrose 4-phosphate and phosphoenolpyruvate: step 2/7. Catalyzes the conversion of 3-deoxy-D-arabino-heptulosonate 7-phosphate (DAHP) to dehydroquinate (DHQ). The polypeptide is 3-dehydroquinate synthase (Opitutus terrae (strain DSM 11246 / JCM 15787 / PB90-1)).